The sequence spans 269 residues: RBPJ-interacting and tubulin-associated protein 1 (269 aa).

Positions 5-17 (VELAVSGIQTLPL) match the Nuclear export signal motif. 2 disordered regions span residues 37–101 (SLFG…NKYR) and 141–269 (FWTP…PPWK). Polar residues predominate over residues 62-77 (RTSGVGTGTSRASGAN). Residues 79–93 (SCETTSSSGSTPTLT) show a composition bias toward low complexity. The short motif at 92–108 (LTPRKKNKYRLISHTPS) is the Nuclear localization signal element. Residues 128-156 (WMAKGDAAKLHSLFWTPPATPRGSHSPRP) form an interaction with RBPJ/RBPSUH region. Residues 156–269 (PRETPLRAIH…ATQKPKPPWK (114 aa)) form an interaction with tubulin region.

This sequence belongs to the RITA family. Interacts with RBPJ/RBPSUH.

Its subcellular location is the cytoplasm. The protein resides in the nucleus. It localises to the cytoskeleton. It is found in the microtubule organizing center. The protein localises to the centrosome. In terms of biological role, tubulin-binding protein that acts as a negative regulator of Notch signaling pathway. Shuttles between the cytoplasm and the nucleus and mediates the nuclear export of RBPJ/RBPSUH, thereby preventing the interaction between RBPJ/RBPSUH and NICD product of Notch proteins (Notch intracellular domain), leading to down-regulate Notch-mediated transcription. May play a role in neurogenesis. The sequence is that of RBPJ-interacting and tubulin-associated protein 1 (RITA1) from Ailuropoda melanoleuca (Giant panda).